A 213-amino-acid polypeptide reads, in one-letter code: Probable chemoreceptor glutamine deamidase CheD (213 aa).

A compositionally biased stretch (basic residues) spans 1 to 12 (MNRHRPHSHRSK). The interval 1 to 25 (MNRHRPHSHRSKPASTQDQPDSVRR) is disordered.

Belongs to the CheD family.

The enzyme catalyses L-glutaminyl-[protein] + H2O = L-glutamyl-[protein] + NH4(+). Probably deamidates glutamine residues to glutamate on methyl-accepting chemotaxis receptors (MCPs), playing an important role in chemotaxis. This is Probable chemoreceptor glutamine deamidase CheD from Rhodopseudomonas palustris (strain BisA53).